The following is a 543-amino-acid chain: Chaperonin GroEL (543 aa).

ATP contacts are provided by residues 29-32 (TLGP), 86-90 (DGTTT), G413, 477-479 (DAL), and D493.

It belongs to the chaperonin (HSP60) family. In terms of assembly, forms a cylinder of 14 subunits composed of two heptameric rings stacked back-to-back. Interacts with the co-chaperonin GroES.

It is found in the cytoplasm. The catalysed reaction is ATP + H2O + a folded polypeptide = ADP + phosphate + an unfolded polypeptide.. Functionally, together with its co-chaperonin GroES, plays an essential role in assisting protein folding. The GroEL-GroES system forms a nano-cage that allows encapsulation of the non-native substrate proteins and provides a physical environment optimized to promote and accelerate protein folding. The protein is Chaperonin GroEL of Clostridium novyi (strain NT).